The chain runs to 609 residues: Kelch-like protein 20 (609 aa).

Positions 68-135 (CDVVLVVGAK…AYTSQITVEE (68 aa)) constitute a BTB domain. The BACK domain maps to 170–272 (CLGIRAFADT…SPKFLVGTVG (103 aa)). 6 Kelch repeats span residues 319-365 (VLFA…VLDD), 367-413 (LYAV…VLGG), 414-460 (FLYA…VLGG), 462-507 (LYAV…VYQD), 509-554 (IYAV…VVNG), and 556-601 (LMAV…VIKM).

As to quaternary structure, component of the BCR(KLHL20) E3 ubiquitin ligase complex, at least composed of CUL3, KLHL20 and RBX1. Interacts with PDZ-RhoGEF/ARHGEF11, DAPK1, PML and CORO7. Interacts with F-actin. Interacts with IFN-gamma (IFNG). Interacts (via kelch repeats) with IVNS1ABP (via kelch repeats); this interaction blocks the assembly of CUL3-KLHL20 complex.

It localises to the cytoplasm. It is found in the perinuclear region. The protein localises to the nucleus. Its subcellular location is the golgi apparatus. The protein resides in the trans-Golgi network. It localises to the cell projection. It is found in the axon. The protein localises to the dendrite. It functions in the pathway protein modification; protein ubiquitination. In terms of biological role, substrate-specific adapter of a BCR (BTB-CUL3-RBX1) E3 ubiquitin-protein ligase complex involved in interferon response and anterograde Golgi to endosome transport. The BCR(KLHL20) E3 ubiquitin ligase complex mediates the ubiquitination of DAPK1, leading to its degradation by the proteasome, thereby acting as a negative regulator of apoptosis. The BCR(KLHL20) E3 ubiquitin ligase complex also specifically mediates 'Lys-33'-linked ubiquitination. Involved in anterograde Golgi to endosome transport by mediating 'Lys-33'-linked ubiquitination of CORO7, promoting interaction between CORO7 and EPS15, thereby facilitating actin polymerization and post-Golgi trafficking. Also acts as a regulator of endothelial migration during angiogenesis by controlling the activation of Rho GTPases. The BCR(KLHL20) E3 ubiquitin ligase complex acts as a regulator of neurite outgrowth by mediating ubiquitination and degradation of PDZ-RhoGEF/ARHGEF11. The sequence is that of Kelch-like protein 20 (KLHL20) from Pongo abelii (Sumatran orangutan).